A 354-amino-acid polypeptide reads, in one-letter code: Uroporphyrinogen decarboxylase (354 aa).

Substrate-binding positions include 27–31 (RQAGR), D77, Y154, S209, and H327.

It belongs to the uroporphyrinogen decarboxylase family. In terms of assembly, homodimer.

It localises to the cytoplasm. The catalysed reaction is uroporphyrinogen III + 4 H(+) = coproporphyrinogen III + 4 CO2. It functions in the pathway porphyrin-containing compound metabolism; protoporphyrin-IX biosynthesis; coproporphyrinogen-III from 5-aminolevulinate: step 4/4. Catalyzes the decarboxylation of four acetate groups of uroporphyrinogen-III to yield coproporphyrinogen-III. This chain is Uroporphyrinogen decarboxylase, found in Shewanella denitrificans (strain OS217 / ATCC BAA-1090 / DSM 15013).